A 1437-amino-acid polypeptide reads, in one-letter code: MRRGCRHHLAAVVLLIATFPPLAYNQNIGGINQNIGGTPQNPTINQVSPGQIFSGTGNNPFYGVNLVPFGPEAGDLMVNPSMLTSGMTIDLYMFFPYYGGLYNYTTISVNGYLGFATVLDQGPTINVGPETTDWPRQEDPAMIAPYLCKQQVPQQGNPARRAGVYYRLLLRQSLFGRESNSNLNLGGTLQQNAFFGQQASQACPGTADSYVRCDSNSDYFLDQMMIWVQEGVAGGAMFRADAAVVVTWYNTASAISGRSDIDAGQTGTYQVIWLTDSTARLSYVIINYDRLGFDAQDFRGNSRSGRCRAVFNGGNHTGTVEVDPTQPYKNTPKVLAQRSGVPHMVRGRYMFRVDDVVRPAGCSNKTGGTYPIMIYPNIVNMLGDMTVDVNACCLDRTQTYIMMIEEREVATCQVINPAIARCSLPRIYDWGTKTVYFQPESRGANDEKAFVGYIYFVPPTLDPMRLDIGNIYEWYKNPMTNYLMPITWYPRNFTNPDILTNGNNMGVRISDDSMYGVQLGLYIVGYREFKDDEIKKFRPEYRTLARITTYSNQNNANYRWMPQEEVINTNQVQQWYLTDWERMHTLYTYRVGFFKLAPINPNDANGTQLLPGLVSAPISLHWLWTPENQQFATLTLNQQDRDQRIEFVKEKSREMCHDWYDEDGALWNFIRDTETNTSCPCIETQALLDLGRFMPHPRCSQMFRDITCTTVIGSKNCYMSSSNIYSSYAGNGNTFNNMDTNRFMTHYGQVCCYDESGYLMQTPYQPVIKTQREYFYNPGYPLRAYEFGTAPYMGQFEVPGLSVFHNDYMPYFLCCKFADFRCQMFYWRRPSSACQQYQPPAIGHAQGAGVFQTIDNDKFIFNQPGVFNFLYIPQSVRTPEVRIQTRLERYPNRKVDFGLLGRYISQYELVQPTNATVITGIALEATGTERVIVMTRKDTRRFRYRTNIIVGNILRYFDTIRLQRFRGVLIYVNNVERGQPEIYVVLEEAQIGVKVTESYALDIDRLPNYQESMGMLDIQISVSPQYGVRPDGDKTQETQYRQMYNLPRVSGLIRPYPDQTSGSLNEGLTLNDVNSDSYRQQIINNYLVLGTGEPGTQQNQAGTLNQNMPQDNMFTTSRDEDKQFDVFPEASMRSEPVYKTAPIFDTGSYRFVPQTGAMILQLLNTCRDLQNNPNTDLQPYQSIATLSYGLQCPDDPGQVLTECGDSVACLYDYALLNSKVLGQEEQDAWNMFTTDRALAIRQYNSCGAINIEYPEYMMKTPALSSGYLQGDVARFECYQSHWVKGDHEYKCGIVVDYNRPNEYRFEWNKGNQPWCRSRIKENYFKWLAVIAGIVGIIIVILLIFLVFWCIKRKKLQESRNYSGTAAYSNNAFQNQTYETKPSRALSVGDLSTAPRTVAMPPPRGTTATPMTLEPRGFSPVPSDVRGSQGMLGLNTSV.

Positions 1 to 25 (MRRGCRHHLAAVVLLIATFPPLAYN) are cleaved as a signal peptide. The Extracellular portion of the chain corresponds to 26–1326 (QNIGGINQNI…SRIKENYFKW (1301 aa)). N-linked (GlcNAc...) asparagine glycans are attached at residues asparagine 103, asparagine 315, asparagine 364, asparagine 492, asparagine 605, asparagine 676, and asparagine 914. Residues 193 to 356 (AFFGQQASQA…GRYMFRVDDV (164 aa)) form the NIDO domain. An AMOP domain is found at 648–829 (VKEKSREMCH…FRCQMFYWRR (182 aa)). The chain crosses the membrane as a helical span at residues 1327–1347 (LAVIAGIVGIIIVILLIFLVF). Residues 1348–1437 (WCIKRKKLQE…QGMLGLNTSV (90 aa)) are Cytoplasmic-facing. The segment at 1394–1419 (PRTVAMPPPRGTTATPMTLEPRGFSP) is disordered.

The protein localises to the membrane. This is an uncharacterized protein from Caenorhabditis elegans.